The chain runs to 170 residues: MASVFSSLRRSLKGLLVLIPVLIGLAVTSPAQAAQWDAETLTVPADPSGTEVTFSDREIDSGRKVFNTSCGTCHAGGITKTNHNVGLDPETLALATPARDNVEALVDYMKDPTSYDGEYSIADLHPSMRDAELYPAMRDLDDEDLRLMAGYILVSPKVQGSAWGGGKIYF.

Residues M1 to A33 form the signal peptide. Residues C70, C73, H74, and H125 each contribute to the heme c site.

It belongs to the cytochrome c family. PsbV subfamily. PSII is composed of 1 copy each of membrane proteins PsbA, PsbB, PsbC, PsbD, PsbE, PsbF, PsbH, PsbI, PsbJ, PsbK, PsbL, PsbM, PsbT, PsbX, PsbY, PsbZ, Psb30/Ycf12, peripheral proteins PsbO, CyanoQ (PsbQ), PsbU, PsbV and a large number of cofactors. It forms dimeric complexes. Heme c serves as cofactor.

Its subcellular location is the cellular thylakoid membrane. In terms of biological role, one of the extrinsic, lumenal subunits of photosystem II (PSII). PSII is a light-driven water plastoquinone oxidoreductase, using light energy to abstract electrons from H(2)O, generating a proton gradient subsequently used for ATP formation. The extrinsic proteins stabilize the structure of photosystem II oxygen-evolving complex (OEC), the ion environment of oxygen evolution and protect the OEC against heat-induced inactivation. Low-potential cytochrome c that plays a role in the OEC of PSII. The chain is Photosystem II extrinsic protein V from Synechococcus sp. (strain CC9605).